The primary structure comprises 531 residues: T-complex protein 1 subunit zeta (531 aa).

N-acetylalanine is present on alanine 2. Lysine 5 carries the post-translational modification N6-acetyllysine. Glycine 39 is a binding site for ADP. Residue glycine 39 participates in ATP binding. Aspartate 90 contacts Mg(2+). Positions 91, 92, 93, 94, 158, and 159 each coordinate ADP. Positions 91, 92, and 93 each coordinate ATP. Lysine 199 is modified (N6-acetyllysine). Serine 205 bears the Phosphoserine mark. A Glycyl lysine isopeptide (Lys-Gly) (interchain with G-Cter in SUMO2) cross-link involves residue lysine 251. Residues lysine 287, lysine 365, lysine 377, and lysine 388 each carry the N6-acetyllysine modification. Alanine 411 is an ADP binding site. Alanine 411, glycine 412, aspartate 496, and lysine 501 together coordinate ATP. Position 496 (aspartate 496) interacts with ADP.

Belongs to the TCP-1 chaperonin family. As to quaternary structure, component of the chaperonin-containing T-complex (TRiC), a hexadecamer composed of two identical back-to-back stacked rings enclosing a protein folding chamber. Each ring is made up of eight different subunits: TCP1/CCT1, CCT2, CCT3, CCT4, CCT5, CCT6A/CCT6, CCT7, CCT8. Interacts with PACRG.

Its subcellular location is the cytoplasm. It catalyses the reaction ATP + H2O = ADP + phosphate + H(+). In terms of biological role, component of the chaperonin-containing T-complex (TRiC), a molecular chaperone complex that assists the folding of actin, tubulin and other proteins upon ATP hydrolysis. The TRiC complex mediates the folding of WRAP53/TCAB1, thereby regulating telomere maintenance. The sequence is that of T-complex protein 1 subunit zeta (CCT6A) from Bos taurus (Bovine).